Here is a 340-residue protein sequence, read N- to C-terminus: Oxygen-dependent coproporphyrinogen-III oxidase (340 aa).

A compositionally biased stretch (polar residues) spans 1–14 (MTVSPTTQPQTNHS). The disordered stretch occupies residues 1-22 (MTVSPTTQPQTNHSLPPADAKQ). Ser109 lines the substrate pocket. A divalent metal cation contacts are provided by His113 and His123. Residue His123 is the Proton donor of the active site. 125–127 (NYR) provides a ligand contact to substrate. Residues His157 and His187 each contribute to the a divalent metal cation site. An important for dimerization region spans residues 278–313 (YVEFNLVYDRGTIFGLQTNGRTESILMSLPPLVRWQ). 296–298 (NGR) lines the substrate pocket.

This sequence belongs to the aerobic coproporphyrinogen-III oxidase family. In terms of assembly, homodimer. It depends on a divalent metal cation as a cofactor.

The protein resides in the cytoplasm. The enzyme catalyses coproporphyrinogen III + O2 + 2 H(+) = protoporphyrinogen IX + 2 CO2 + 2 H2O. The protein operates within porphyrin-containing compound metabolism; protoporphyrin-IX biosynthesis; protoporphyrinogen-IX from coproporphyrinogen-III (O2 route): step 1/1. In terms of biological role, involved in the heme and chlorophyll biosynthesis. Catalyzes the aerobic oxidative decarboxylation of propionate groups of rings A and B of coproporphyrinogen-III to yield the vinyl groups in protoporphyrinogen-IX. In Synechocystis sp. (strain ATCC 27184 / PCC 6803 / Kazusa), this protein is Oxygen-dependent coproporphyrinogen-III oxidase.